Consider the following 572-residue polypeptide: MARILITSAIPYINGIKHLGNLVGSQLPADLYARYQRGRGNEVMFLCATDEHGTPAELAAAKAGKPVAEYCAEMHGVQADIARRFGLSFDHFGRSSSAQNHKLTQHFAGKLAENDLIREVSERQVYSNADGRFLPDRYIEGTCPNCGYDKARGDQCENCTKQLDPTDLIEPRSAISGSTDLEVRETKHLYLRQSALKDQLDAWIDSKADWPVLTTSIAKKWLHDGDGLQDRGITRDLDWGIPVKKGEQDWPGMEGKVFYVWFDAPIEYIACAGEWAEAHGKSDAEWERWWRTDKGADDVRYVQFMGKDNVPFHTLSFPATLIGSGEPWKMVDHLKSFNYLNYDGGQFSTSQGRGVFMDQALEILPADYWRWWLLSHAPENSDSEFTWENFQASVNKDLADVLGNFVSRITKFCRSKFGEEVPEGGAYGPQEEALIAELTTRLRAYEGHMEAMEVRKSAQELRAIWAAGNEYLQSAAPWTLFKTDPVQAAAQVRLGLNLIRLYAVLSAPFIPAASARMLEAMQTSDDNWPVDIATALNALAPGHAFTVPEVLFAKISDEDREGWQQRFAGVRS.

A 'HIGH' region motif is present at residues 11–21 (PYINGIKHLGN). The Zn(2+) site is built by cysteine 143, cysteine 146, cysteine 156, and cysteine 159. The 'KMSKS' region motif lies at 346-350 (QFSTS). Threonine 349 contacts ATP.

It belongs to the class-I aminoacyl-tRNA synthetase family. MetG type 1 subfamily. In terms of assembly, monomer. The cofactor is Zn(2+).

It localises to the cytoplasm. The enzyme catalyses tRNA(Met) + L-methionine + ATP = L-methionyl-tRNA(Met) + AMP + diphosphate. Its function is as follows. Is required not only for elongation of protein synthesis but also for the initiation of all mRNA translation through initiator tRNA(fMet) aminoacylation. The chain is Methionine--tRNA ligase from Ruegeria pomeroyi (strain ATCC 700808 / DSM 15171 / DSS-3) (Silicibacter pomeroyi).